A 481-amino-acid chain; its full sequence is Glutamate--tRNA ligase (481 aa).

Positions 9 to 19 (PSPTGNLHIGT) match the 'HIGH' region motif. The Zn(2+) site is built by C98, C100, H125, and D127. Residues 248 to 252 (KLSKR) carry the 'KMSKS' region motif. An ATP-binding site is contributed by K251.

It belongs to the class-I aminoacyl-tRNA synthetase family. Glutamate--tRNA ligase type 1 subfamily. In terms of assembly, monomer. Requires Zn(2+) as cofactor.

The protein localises to the cytoplasm. It carries out the reaction tRNA(Glu) + L-glutamate + ATP = L-glutamyl-tRNA(Glu) + AMP + diphosphate. Its function is as follows. Catalyzes the attachment of glutamate to tRNA(Glu) in a two-step reaction: glutamate is first activated by ATP to form Glu-AMP and then transferred to the acceptor end of tRNA(Glu). In Synechococcus elongatus (strain ATCC 33912 / PCC 7942 / FACHB-805) (Anacystis nidulans R2), this protein is Glutamate--tRNA ligase.